Here is a 358-residue protein sequence, read N- to C-terminus: MTRSSDTPSSSRASLSYKDAGVDIDAGNALVERIKGVAKRTSRPEVMGGLGGFGALCQLPTGYREPVLVSGTDGVGTKLRLAMDLARHDTIGIDLVAMCVNDLVVAGAEPLFFLDYYATGKLDVDIAADVVTGIGEGCAQAGCALIGGETAEMPGMYAGSDYDLAGFCVGVVEKSEILDGSRVAEGDVLLGLASSGPHSNGYSLIRKIIERGQADLEQEIDGIPLRDALLAPTRIYVKSLLSLIKESDVTVHALSHITGGGLLENVPRVLPDTLAARIDAASWTRPAVFDWLQREGNVDEHEMHRVLNCGIGMVVVVPAAQAERAQAALEAAGETVHRLGEIVPRQDEEEQVRLENVR.

This sequence belongs to the AIR synthase family.

The protein localises to the cytoplasm. The catalysed reaction is 2-formamido-N(1)-(5-O-phospho-beta-D-ribosyl)acetamidine + ATP = 5-amino-1-(5-phospho-beta-D-ribosyl)imidazole + ADP + phosphate + H(+). Its pathway is purine metabolism; IMP biosynthesis via de novo pathway; 5-amino-1-(5-phospho-D-ribosyl)imidazole from N(2)-formyl-N(1)-(5-phospho-D-ribosyl)glycinamide: step 2/2. This chain is Phosphoribosylformylglycinamidine cyclo-ligase, found in Chromohalobacter salexigens (strain ATCC BAA-138 / DSM 3043 / CIP 106854 / NCIMB 13768 / 1H11).